Here is a 131-residue protein sequence, read N- to C-terminus: MAGVKALVALSFSGAIGLTFLMLGCALEDYGVYWPLFVLIFHAISPIPHFIAKRVTYDSDATSSACRELAYFFTTGIVVSAFGFPVILARVAVIKWGACGLVLAGNAVIFLTIQGFFLIFGRGDDFSWEQW.

Helical transmembrane passes span 7-27 (LVAL…GCAL), 32-52 (VYWP…HFIA), 69-89 (LAYF…VILA), and 100-120 (GLVL…FLIF).

Belongs to the OB-RGRP/VPS55 family. Interacts with LEPR. Interacts with RAB13. As to expression, expressed at the highest levels in heart and placenta and at a lesser extent in lung, liver, skeletal muscle, kidney and pancreas.

It localises to the golgi apparatus membrane. The protein localises to the endosome membrane. In terms of biological role, negatively regulates leptin receptor (LEPR) cell surface expression, and thus decreases response to leptin. Negatively regulates growth hormone (GH) receptor cell surface expression in liver. May play a role in liver resistance to GH during periods of reduced nutrient availability. This is Leptin receptor gene-related protein (LEPROT) from Homo sapiens (Human).